An 86-amino-acid polypeptide reads, in one-letter code: Small ribosomal subunit protein bS20 (86 aa).

Belongs to the bacterial ribosomal protein bS20 family.

Binds directly to 16S ribosomal RNA. In Rhodococcus opacus (strain B4), this protein is Small ribosomal subunit protein bS20.